A 268-amino-acid chain; its full sequence is Undecaprenyl-diphosphatase (268 aa).

A run of 7 helical transmembrane segments spans residues Thr5–Ser25, Gly43–Ala63, Leu84–Ile104, Val107–Leu127, Ala184–Leu204, Ala214–Val234, and Ala247–Leu267.

Belongs to the UppP family.

The protein resides in the cell inner membrane. It catalyses the reaction di-trans,octa-cis-undecaprenyl diphosphate + H2O = di-trans,octa-cis-undecaprenyl phosphate + phosphate + H(+). In terms of biological role, catalyzes the dephosphorylation of undecaprenyl diphosphate (UPP). Confers resistance to bacitracin. The chain is Undecaprenyl-diphosphatase from Chelativorans sp. (strain BNC1).